The following is a 300-amino-acid chain: Type II methyltransferase M.Cfr9I (300 aa).

The segment at 109-129 (RGYRAPDKKNPARAMAVRPDT) is disordered.

It belongs to the N(4)/N(6)-methyltransferase family. N(4) subfamily.

The catalysed reaction is a 2'-deoxycytidine in DNA + S-adenosyl-L-methionine = an N(4)-methyl-2'-deoxycytidine in DNA + S-adenosyl-L-homocysteine + H(+). A beta subtype methylase, recognizes the double-stranded sequence 5'-CCCGGG-3', methylates C-2 on both strands, and protects the DNA from cleavage by the Cfr9I endonuclease. This chain is Type II methyltransferase M.Cfr9I, found in Citrobacter freundii.